A 143-amino-acid chain; its full sequence is Ribosome maturation factor RimP (143 aa).

Belongs to the RimP family.

The protein localises to the cytoplasm. In terms of biological role, required for maturation of 30S ribosomal subunits. The chain is Ribosome maturation factor RimP from Neisseria gonorrhoeae (strain ATCC 700825 / FA 1090).